Reading from the N-terminus, the 535-residue chain is MNIPQEVARRRTFAIISHPDAGKTTLTEKLLLFAGAIQIAGSVKARKASRHASSDWMEIEKQRGISVASSVMQMEYRDCVINLLDTPGHQDFSEDTYRVLTAVDAALMVIDAANGVEPQTIRLLQVCRARNTPIITFINKLDREVREPLELLSEIEGHLGMDTVPFSWPVGMGKAFGGVFDIRRNRMRIFRAGQERRGEDDEFIDGLDNPEIPRRFGAAFAQASGEIELINEAAPAFDREAFLAGKQTPVFFGSAINNFGVQEVLDALVDQAPAPGPRQALEREVRPDEPKFTGVVFKVQANMDPAHRDRVAFVRVSSGRFERGMRLKVARTGKEMRPNNVVSFLSQRRELLDEAYASDVIGIPNHGVLQLGDVLTEGESLRFTGLPFFAPELFQAVEVKDPLRTKQLRVGLTQLGEEGAIQVFRPEAAGGALLLGAVGQLQFEVVAHRLKTEYGVDARMMPSRYTSARWITSDDPRALRKFMDANAAHIAYDVVDAAAFLITSPAQLRVAEDLYPNVKFHALREHGGKVFGDKA.

The region spanning alanine 8 to arginine 278 is the tr-type G domain. Residues serine 17 to threonine 24, aspartate 85 to histidine 89, and asparagine 139 to aspartate 142 each bind GTP.

The protein belongs to the TRAFAC class translation factor GTPase superfamily. Classic translation factor GTPase family. PrfC subfamily.

The protein resides in the cytoplasm. Its function is as follows. Increases the formation of ribosomal termination complexes and stimulates activities of RF-1 and RF-2. It binds guanine nucleotides and has strong preference for UGA stop codons. It may interact directly with the ribosome. The stimulation of RF-1 and RF-2 is significantly reduced by GTP and GDP, but not by GMP. In Bordetella parapertussis (strain 12822 / ATCC BAA-587 / NCTC 13253), this protein is Peptide chain release factor 3.